A 256-amino-acid chain; its full sequence is Ribosomal RNA small subunit methyltransferase A (256 aa).

6 residues coordinate S-adenosyl-L-methionine: Asn-12, Leu-14, Gly-39, Glu-60, Asp-85, and Asn-103.

The protein belongs to the class I-like SAM-binding methyltransferase superfamily. rRNA adenine N(6)-methyltransferase family. RsmA subfamily.

The protein resides in the cytoplasm. The enzyme catalyses adenosine(1518)/adenosine(1519) in 16S rRNA + 4 S-adenosyl-L-methionine = N(6)-dimethyladenosine(1518)/N(6)-dimethyladenosine(1519) in 16S rRNA + 4 S-adenosyl-L-homocysteine + 4 H(+). In terms of biological role, specifically dimethylates two adjacent adenosines (A1518 and A1519) in the loop of a conserved hairpin near the 3'-end of 16S rRNA in the 30S particle. May play a critical role in biogenesis of 30S subunits. This is Ribosomal RNA small subunit methyltransferase A from Legionella pneumophila (strain Lens).